A 706-amino-acid polypeptide reads, in one-letter code: Gamma-adducin (706 aa).

Residues 1–11 show a composition bias toward low complexity; the sequence is MSSDTSPAVVT. Residues 1-23 form a disordered region; sequence MSSDTSPAVVTTPPPPSMPHKER. Ser-2 carries the post-translational modification N-acetylserine. Phosphoserine is present on residues Ser-31, Ser-42, Ser-64, Ser-402, Ser-414, Ser-423, Ser-442, and Ser-461. 4 disordered regions span residues 471–495, 534–556, 574–610, and 651–706; these read AEDSSKVSSGTPIKIEDPNQFVPLN, PPSTMQFDDDDQGPPAPPNPFSH, QGLDDAEQGSLSDDAASVSQIQSQTQSPQSVPERLEE, and TSTT…KVEA. Lys-484 participates in a covalent cross-link: Glycyl lysine isopeptide (Lys-Gly) (interchain with G-Cter in SUMO2). 3 positions are modified to phosphoserine: Ser-583, Ser-585, and Ser-590. Low complexity-rich tracts occupy residues 590 to 605 and 651 to 662; these read SVSQIQSQTQSPQSVP and TSTTIENIEITI. A phosphoserine mark is found at Ser-673, Ser-677, Ser-679, Ser-681, and Ser-683. A compositionally biased stretch (basic residues) spans 682–706; that stretch reads PSKKKKKFRTPSFLKKNKKKEKVEA. The segment at 684–701 is interaction with calmodulin; the sequence is KKKKKFRTPSFLKKNKKK.

It belongs to the aldolase class II family. Adducin subfamily. As to quaternary structure, heterodimer of an alpha and a gamma subunit. In terms of processing, sumoylated. Post-translationally, proteolytically cleaved by asparagine endopeptidase (AEP) into 2 fragments. Overexpression of the 1-357 fragment induces neuronal apoptosis, and overexpression of either 1-357 or 358-706 fragment increases the degeneration of dendritic spines. Overexpression of the 1-357 fragment impairs neurite outgrowth by downregulating the expression of Rac2, and induces synaptic dysfunction and cognitive impairments in tau P301S transgenic mice, a mouse model for Alzheimer disease (AD). In terms of tissue distribution, cleavage fragment 1-357 is expressed in the brain and the expression increases with age (at protein level). The fragment is expressed in the cortex, hippocampal CA1 region and hippocampal dentate gyrus in tau P301S transgenic mice, a mouse model for Alzheimer disease (AD) (at protein level). The fragment is only weakly expressed in non-transgenic mouse brain sections (at protein level).

It is found in the cytoplasm. The protein localises to the cytoskeleton. It localises to the cell membrane. Its function is as follows. Membrane-cytoskeleton-associated protein that promotes the assembly of the spectrin-actin network. Plays a role in actin filament capping. Binds to calmodulin. Involved in myogenic reactivity of the renal afferent arteriole (Af-art), renal interlobular arteries and middle cerebral artery (MCA) to increased perfusion pressure. Involved in regulation of potassium channels in the vascular smooth muscle cells (VSMCs) of the Af-art and MCA ex vivo. Involved in regulation of glomerular capillary pressure, glomerular filtration rate (GFR) and glomerular nephrin expression in response to hypertension. Involved in renal blood flow (RBF) autoregulation. Plays a role in podocyte structure and function. Regulates globular monomer actin (G-actin) and filamentous polymer actin (F-actin) ratios in the primary podocytes affecting actin cytoskeleton organization. Regulates expression of synaptopodin, RhoA, Rac1 and CDC42 in the renal cortex and the primary podocytes. Regulates expression of nephrin in the glomeruli and in the primary podocytes, expression of nephrin and podocinin in the renal cortex, and expression of focal adhesion proteins integrin alpha-3 and integrin beta-1 in the glomeruli. Involved in cell migration and cell adhesion of podocytes, and in podocyte foot process effacement. Regulates expression of profibrotics markers MMP2, MMP9, TGF beta-1, tubular tight junction protein E-cadherin, and mesenchymal markers vimentin and alpha-SMA. Promotes the growth of neurites. This is Gamma-adducin (Add3) from Mus musculus (Mouse).